Consider the following 582-residue polypeptide: MHNVNNSVDIKPEVPLALDPGSPLDLRTDIRMQGSASEVTVWERQLQQELLLIQKQQQIQKQLLITEFQKQHENLVRQHQAQIQEHLKLQQELHVMKQQQEQLEKERKLELQSQERELERHRREQQVLVLRNRERTRESLTGAVASNEVKQKLQEFLLSKSTKDITLNGIPQKITQSSKLWYTASHHTSLEQSSPPLGGASSSCKISLPSPQDYRDDFPLRKTVSEPNLKVRSRLKQKVAERRSSPLLRRKEGNIMTPFKKRALELLESTASSSAPGSGPSSPNGACSALGAENGPSSLPVTTRTERWPSQSRLLGPESSVSMLNLYTSPSLPNISLGFSAASSPISAALGLQEKHVDNGAVSAVIQGLPTQLLGPVPLSVMETKVSSSHQALLQHLLQKEQLRHQKILSSGQSPVHPPSPLAMMENSPSSTRPKLPRHRPLNRTQSAPLPQSTLAQLVIQQQHQNFLEKQKQYQQQVHINKMLSKSIEQLRQPNVHLQESEEEEGEDCQEHAMQEESSPSGGVIRKHSPQNTSRSPTIPLDSHPGVIRVKEEPGASDDETMANQSSYIHQVKGRMVIQAMI.

The interaction with mef2 stretch occupies residues 146 to 195 (SNEVKQKLQEFLLSKSTKDITLNGIPQKITQSSKLWYTASHHTSLEQSSP). A compositionally biased stretch (polar residues) spans 189–205 (SLEQSSPPLGGASSSCK). Disordered regions lie at residues 189 to 254 (SLEQ…KEGN), 270 to 314 (TASS…QSRL), 409 to 447 (LSSGQSPVHPPSPLAMMENSPSSTRPKLPRHRPLNRTQS), and 496 to 567 (VHLQ…NQSS). Basic and acidic residues-rich tracts occupy residues 213 to 224 (DYRDDFPLRKTV) and 238 to 253 (KVAERRSSPLLRRKEG). The segment covering 270–289 (TASSSAPGSGPSSPNGACSA) has biased composition (low complexity). The segment covering 295–314 (GPSSLPVTTRTERWPSQSRL) has biased composition (polar residues).

Belongs to the histone deacetylase family. HD type 2 subfamily. In terms of assembly, homodimer. Interacts with mef2.

The protein resides in the nucleus. The catalysed reaction is N(6)-acetyl-L-lysyl-[histone] + H2O = L-lysyl-[histone] + acetate. Its function is as follows. Devoided of intrinsic deacetylase activity, promotes the deacetylation of lysine residues on the N-terminal part of the core histones (H2A, H2B, H3 and H4) by recruiting other histone deacetylases. Histone deacetylation gives a tag for epigenetic repression and plays an important role in transcriptional regulation, cell cycle progression and developmental events. Represses MEF2-dependent transcription. This is Histone deacetylase 9-B (hdac9b) from Danio rerio (Zebrafish).